A 104-amino-acid chain; its full sequence is uncharacterized protein (104 aa).

This is an uncharacterized protein from Mycobacterium tuberculosis (strain ATCC 25618 / H37Rv).